The sequence spans 524 residues: L-tyrosine:2-oxoglutarate aminotransferase atrD (524 aa).

This sequence belongs to the class-I pyridoxal-phosphate-dependent aminotransferase family. The cofactor is pyridoxal 5'-phosphate.

It carries out the reaction L-tyrosine + 2-oxoglutarate = 3-(4-hydroxyphenyl)pyruvate + L-glutamate. It participates in secondary metabolite biosynthesis. Functionally, the L-tyrosine:2-oxoglutarate aminotransferase atrD and the atromentin synthetase atrA catalyze consecutive steps to turn over L-tyrosine into atromentin, which represents the generic precursor molecule for the entire terphenylquinone and pulvinic acid family of pigments, which are widely distributed secondary metabolites in homobasidiomycetes. The first step is catalyzed by atrD which converts L-tyrosine in to 4-hydroxyphenylpyruvate (4-HPP). Adenylation of two 4-HPP monomers by the atrA adenylation (A) domain, ester bond formation between monomers and atrA, and symmetric C-C-bond formation between two monomers by atrA leads to atromentin. This Tapinella panuoides (Oyster rollrim mushroom) protein is L-tyrosine:2-oxoglutarate aminotransferase atrD.